We begin with the raw amino-acid sequence, 134 residues long: Spermadhesin-1 (134 aa).

The first 20 residues, 1-20 (MKLSSVIPWALLLSTATVDS), serve as a signal peptide directing secretion. Intrachain disulfides connect C30–C51 and C74–C95. The region spanning 30–131 (CGGILKEESG…SFYEVLYFQD (102 aa)) is the CUB domain.

This sequence belongs to the spermadhesin family. Seminal vesicle tissue, ampulla and weakly in tissue of epididymis.

The protein localises to the secreted. In terms of biological role, stimulates cell division and progesterone secretion of bovine granulosa cells in vitro in a potent and dose dependent manner. This protein appears to be a potent growth factor with effects on ovarian granulosa cells. This Bos taurus (Bovine) protein is Spermadhesin-1 (SPADH1).